Consider the following 986-residue polypeptide: Ankyrin repeat, PH and SEC7 domain containing protein secG (986 aa).

Residues 1-28 (MGSTSNSTKNTGSTTTTTTTAAPATTAK) are compositionally biased toward low complexity. Positions 1–43 (MGSTSNSTKNTGSTTTTTTTAAPATTAKHSNSAPTRPSVHYYS) are disordered. Polar residues predominate over residues 29-43 (HSNSAPTRPSVHYYS). ANK repeat units follow at residues 34 to 63 (PTRPSVHYYSSTGDIEKLSNLLNNSATSPD), 68 to 97 (EKRTPLHHAAFCGSAACVNFLLDKKANANI), 101 to 131 (AGNTPLQWASSRGHLECIKLLVEKGGVDVNT), 135 to 164 (KNGTPLHKASLFASAECVLYLLNGKADPRA), 168 to 197 (NGETPLHHASAGGNPQCVELLIKADSKVNA), 201 to 230 (DCITPLHQASFSGHSSCVSLLLKKGAKVDP), 234 to 263 (HGISPLHNAASAGYVDCVEQLVRNGENINC), 267 to 296 (EGVTPLHHTCFNGNLQLTKRLIELGAKINM), 300 to 329 (MGETPLHKAAFNGHKEVCEYLLYLDPTMID), 334 to 363 (RQSTSLHLAAFNGLLDMVDLLIRYKAQINI), 367 to 396 (EGATPLHKASFNGHSSCAKLLVDKGAPICI), 400 to 429 (QGATPLHKAAFNGRSKCLATLIRSGAELEV), 433 to 462 (QGGTPLHNAAYNGHSDCCRILLKKGANVNA), 466 to 495 (HSSTPLHLASAAGARDTVDVLIQFKARIDA), and 499 to 528 (AGKTPLVYAIKKNHSDVARVLIRAGADLDQ). Positions 580 to 770 (QLAAEKQKLL…ENLYDKIVTN (191 aa)) constitute an SEC7 domain. The PH domain maps to 784 to 895 (HVEKKGWLTK…WVQSIKSNIH (112 aa)). A disordered region spans residues 911-986 (IRGRGKVSTK…PVQQQTSALS (76 aa)). Residues 920-929 (KPIQNRKQTI) are compositionally biased toward polar residues. Composition is skewed to low complexity over residues 936–953 (TTTTTTSTASNNVTSVGS) and 963–986 (SSGSKPVTFSSTSSPVQQQTSALS).

This is Ankyrin repeat, PH and SEC7 domain containing protein secG (secG) from Dictyostelium discoideum (Social amoeba).